The chain runs to 385 residues: Arginine biosynthesis bifunctional protein ArgJ (385 aa).

Substrate is bound by residues threonine 142, lysine 168, threonine 179, glutamate 259, asparagine 380, and threonine 385. Threonine 179 (nucleophile) is an active-site residue.

The protein belongs to the ArgJ family. In terms of assembly, heterotetramer of two alpha and two beta chains.

It localises to the cytoplasm. The catalysed reaction is N(2)-acetyl-L-ornithine + L-glutamate = N-acetyl-L-glutamate + L-ornithine. The enzyme catalyses L-glutamate + acetyl-CoA = N-acetyl-L-glutamate + CoA + H(+). The protein operates within amino-acid biosynthesis; L-arginine biosynthesis; L-ornithine and N-acetyl-L-glutamate from L-glutamate and N(2)-acetyl-L-ornithine (cyclic): step 1/1. It functions in the pathway amino-acid biosynthesis; L-arginine biosynthesis; N(2)-acetyl-L-ornithine from L-glutamate: step 1/4. Functionally, catalyzes two activities which are involved in the cyclic version of arginine biosynthesis: the synthesis of N-acetylglutamate from glutamate and acetyl-CoA as the acetyl donor, and of ornithine by transacetylation between N(2)-acetylornithine and glutamate. The sequence is that of Arginine biosynthesis bifunctional protein ArgJ from Leptospira interrogans serogroup Icterohaemorrhagiae serovar copenhageni (strain Fiocruz L1-130).